Reading from the N-terminus, the 160-residue chain is Nucleotide-binding protein CbuK_1936 (160 aa).

It belongs to the YajQ family.

Its function is as follows. Nucleotide-binding protein. The protein is Nucleotide-binding protein CbuK_1936 of Coxiella burnetii (strain CbuK_Q154) (Coxiella burnetii (strain Q154)).